The chain runs to 316 residues: DNA-directed RNA polymerase III subunit RPC6 (316 aa).

Alanine 2 carries the post-translational modification N-acetylalanine. Residues lysine 5 and lysine 7 each participate in a glycyl lysine isopeptide (Lys-Gly) (interchain with G-Cter in SUMO2) cross-link. Residues cysteine 287, cysteine 290, cysteine 296, and cysteine 307 each coordinate [4Fe-4S] cluster.

The protein belongs to the eukaryotic RPC34/RPC39 RNA polymerase subunit family. Component of the RNA polymerase III complex consisting of 17 subunits: a ten-subunit horseshoe-shaped catalytic core composed of POLR3A/RPC1, POLR3B/RPC2, POLR1C/RPAC1, POLR1D/RPAC2, POLR3K/RPC10, POLR2E/RPABC1, POLR2F/RPABC2, POLR2H/RPABC3, POLR2K/RPABC4 and POLR2L/RPABC5; a mobile stalk composed of two subunits POLR3H/RPC8 and CRCP/RPC9, protruding from the core and functioning primarily in transcription initiation; and additional subunits homologous to general transcription factors of the RNA polymerase II machinery, POLR3C/RPC3-POLR3F/RPC6-POLR3G/RPC7 heterotrimer required for transcription initiation and POLR3D/RPC4-POLR3E/RPC5 heterodimer involved in both transcription initiation and termination. Directly interacts with POLR3C. Interacts with TBP and TFIIIB90 and GTF3C4. Interacts with MAF1. As part of the RNA polymerase III complex, interacts with PKP2.

The protein localises to the nucleus. Functionally, DNA-dependent RNA polymerase catalyzes the transcription of DNA into RNA using the four ribonucleoside triphosphates as substrates. Specific peripheric component of RNA polymerase III (Pol III) which synthesizes small non-coding RNAs including 5S rRNA, snRNAs, tRNAs and miRNAs from at least 500 distinct genomic loci. Part of POLR3C/RPC3-POLR3F/RPC6-POLR3G/RPC7 heterotrimer that coordinates the dynamics of Pol III stalk and clamp modules during the transition from apo to elongation state. Pol III plays a key role in sensing and limiting infection by intracellular bacteria and DNA viruses, including varicella zoster virus. Acts as a nuclear and cytosolic DNA sensor detecting AT-rich DNA, involved in innate immune response. Can sense non-self dsDNA that serves as template for transcription into dsRNA. The non-self RNA polymerase III transcripts, such as Epstein-Barr virus-encoded RNAs (EBERs) induce type I interferon and NF-kappa-B through the RIG-I pathway. Preferentially binds double-stranded DNA (dsDNA). In Homo sapiens (Human), this protein is DNA-directed RNA polymerase III subunit RPC6.